The following is a 640-amino-acid chain: uncharacterized protein (640 aa).

The interval 594 to 614 (QCSSDHCKPGSSETLPEATNE) is disordered.

This is an uncharacterized protein from Rattus norvegicus (Rat).